Consider the following 255-residue polypeptide: Aliphatic sulfonates import ATP-binding protein SsuB (255 aa).

The 222-residue stretch at 12–233 folds into the ABC transporter domain; sequence LLLNAVSKHY…RLGSVRLAEL (222 aa). ATP is bound at residue 44–51; it reads GRSGGGKS.

The protein belongs to the ABC transporter superfamily. Aliphatic sulfonates importer (TC 3.A.1.17.2) family. The complex is composed of two ATP-binding proteins (SsuB), two transmembrane proteins (SsuC) and a solute-binding protein (SsuA).

Its subcellular location is the cell inner membrane. The catalysed reaction is ATP + H2O + aliphatic sulfonate-[sulfonate-binding protein]Side 1 = ADP + phosphate + aliphatic sulfonateSide 2 + [sulfonate-binding protein]Side 1.. Part of the ABC transporter complex SsuABC involved in aliphatic sulfonates import. Responsible for energy coupling to the transport system. The sequence is that of Aliphatic sulfonates import ATP-binding protein SsuB from Shigella sonnei (strain Ss046).